Here is a 419-residue protein sequence, read N- to C-terminus: Serine/threonine-protein kinase Kist (419 aa).

The Protein kinase domain maps to 23-303 (WQVQSRLGSG…PAEMALCSPF (281 aa)). ATP contacts are provided by residues 29-37 (LGSGSSASV) and K54. The active-site Proton acceptor is D158. The region spanning 323-405 (LRLLNVLDDD…GKFVVATFYP (83 aa)) is the RRM domain.

This sequence belongs to the protein kinase superfamily. Ser/Thr protein kinase family. In terms of assembly, interacts with PAM and CDKN1B/p27Kip1. Interacts with stathmin.

The protein localises to the nucleus. The catalysed reaction is L-seryl-[protein] + ATP = O-phospho-L-seryl-[protein] + ADP + H(+). The enzyme catalyses L-threonyl-[protein] + ATP = O-phospho-L-threonyl-[protein] + ADP + H(+). Upon serum stimulation, phosphorylates CDKN1B/p27Kip1, thus controlling CDKN1B subcellular location and cell cycle progression in G1 phase. May be involved in trafficking and/or processing of RNA. The polypeptide is Serine/threonine-protein kinase Kist (Uhmk1) (Mus musculus (Mouse)).